A 562-amino-acid polypeptide reads, in one-letter code: Dihydroxy-acid dehydratase (562 aa).

A Mg(2+)-binding site is contributed by Asp78. Cys119 contacts [2Fe-2S] cluster. Residues Asp120 and Lys121 each contribute to the Mg(2+) site. Lys121 is subject to N6-carboxylysine. Position 192 (Cys192) interacts with [2Fe-2S] cluster. Glu450 is a Mg(2+) binding site. Ser476 acts as the Proton acceptor in catalysis.

The protein belongs to the IlvD/Edd family. As to quaternary structure, homodimer. The cofactor is [2Fe-2S] cluster. It depends on Mg(2+) as a cofactor.

The enzyme catalyses (2R)-2,3-dihydroxy-3-methylbutanoate = 3-methyl-2-oxobutanoate + H2O. It carries out the reaction (2R,3R)-2,3-dihydroxy-3-methylpentanoate = (S)-3-methyl-2-oxopentanoate + H2O. The protein operates within amino-acid biosynthesis; L-isoleucine biosynthesis; L-isoleucine from 2-oxobutanoate: step 3/4. It participates in amino-acid biosynthesis; L-valine biosynthesis; L-valine from pyruvate: step 3/4. Functionally, functions in the biosynthesis of branched-chain amino acids. Catalyzes the dehydration of (2R,3R)-2,3-dihydroxy-3-methylpentanoate (2,3-dihydroxy-3-methylvalerate) into 2-oxo-3-methylpentanoate (2-oxo-3-methylvalerate) and of (2R)-2,3-dihydroxy-3-methylbutanoate (2,3-dihydroxyisovalerate) into 2-oxo-3-methylbutanoate (2-oxoisovalerate), the penultimate precursor to L-isoleucine and L-valine, respectively. The chain is Dihydroxy-acid dehydratase from Nautilia profundicola (strain ATCC BAA-1463 / DSM 18972 / AmH).